The chain runs to 678 residues: Alpha-L-arabinofuranosidase 1 (678 aa).

The first 33 residues, 1-33 (MDMESWKLLRSVCVLSFLLGSCFVYQSLRVVDA), serve as a signal peptide directing secretion. A CBM-cenC domain is found at 152–239 (NIEEGKKYKV…WIDQVSAMPV (88 aa)). Asn181, Asn362, Asn523, and Asn555 each carry an N-linked (GlcNAc...) asparagine glycan.

It belongs to the glycosyl hydrolase 51 family. As to expression, expressed in roots, leaves, flowers, stems, siliques and seedlings. Observed in zones of cell proliferation, the vascular system and floral abscission zones. Expressed in the guard cells in stems, in xylem vessels and parenchyma cells surrounding the vessels, in the cambium and in the phloem, but not in the secondary xylem.

It is found in the secreted. It localises to the extracellular space. Its subcellular location is the extracellular matrix. The enzyme catalyses Hydrolysis of terminal non-reducing alpha-L-arabinofuranoside residues in alpha-L-arabinosides.. Its function is as follows. May be involved in the coordinated dissolution of the cell wall matrix during abscission and in the secondary cell wall formation in xylem vessels. Prefers arabinoxylan, but may also use pectic arabinans as substrates. This chain is Alpha-L-arabinofuranosidase 1 (ASD1), found in Arabidopsis thaliana (Mouse-ear cress).